Reading from the N-terminus, the 278-residue chain is Embryonic polyadenylate-binding protein 2 (278 aa).

2 disordered regions span residues 21–66 (VSSD…GDAG) and 101–128 (EGTP…LSPE). Positions 35–50 (ETKEILGPEGGEGKEE) are enriched in basic and acidic residues. Acidic residues predominate over residues 51 to 63 (KEEEEDAEEDQDG). The RRM domain occupies 147 to 224 (RSVYVGNVDY…RVIKVLPKRT (78 aa)). The tract at residues 227–278 (PGISSTDRGGLRGHPGSRGAPFPHSGLQGRPRLRPQGQNRARGKFSPWFSPY) is disordered.

In terms of tissue distribution, expressed in various adult tissues.

Its subcellular location is the cytoplasm. Binds the poly(A) tail of mRNA. The sequence is that of Embryonic polyadenylate-binding protein 2 (PABPN1L) from Homo sapiens (Human).